The primary structure comprises 288 residues: MSVVSMKQLLEAGAHFGHRTRRWNPKMQPYIFTARKGIHIIDLQKTLKSIDEAYDFLKNSVMEKKRVLFVGTKKQAQQIVADEARRCGEFFVNNRWLGGLLTNFKTIKSRIDKLEQLTEYVESEEFSKLPKKEQATIRRNLEKLEKNLGGLRGMKKIPDILFIIDPKKEEIAVKEANLLKIPIIATVDTNCDPDVIDYVIPANDDAIRTIMLIVSKMADAIIEGKEGRIETLEESSEVEEEEEEKDEVIDEVDEKLEAEEKYASYAEEVEEVEEEFIPSEIEDEDEKF.

Positions 267-288 (EEVEEVEEEFIPSEIEDEDEKF) are disordered.

It belongs to the universal ribosomal protein uS2 family.

The protein is Small ribosomal subunit protein uS2 of Petrotoga mobilis (strain DSM 10674 / SJ95).